Consider the following 75-residue polypeptide: Conotoxin Im23.5 (75 aa).

Residues 1–23 (MKFFTCLLLLLVVLTVVFDNVDA) form the signal peptide. 3 disulfides stabilise this stretch: C24-C28, C37-C40, and C41-C43. Residues 24 to 50 (CDRSCTGVMGHPSCATCCACFTSAGKR) constitute a propeptide that is removed on maturation.

Expressed by the venom duct.

The protein resides in the secreted. Functionally, probable neurotoxin. This chain is Conotoxin Im23.5, found in Conus imperialis (Imperial cone).